A 614-amino-acid polypeptide reads, in one-letter code: Threonine--tRNA ligase (614 aa).

The interval 1-138 (MRILTIHARK…PLSELSKTIR (138 aa)) is editing domain. Catalytic stretches follow at residues 195–492 (NRVN…PYIP) and 196–492 (RVND…PYIP). Zn(2+) contacts are provided by Cys289, His340, and His461.

The protein belongs to the class-II aminoacyl-tRNA synthetase family. As to quaternary structure, homodimer. Zn(2+) serves as cofactor.

Its subcellular location is the cytoplasm. It catalyses the reaction tRNA(Thr) + L-threonine + ATP = L-threonyl-tRNA(Thr) + AMP + diphosphate + H(+). In terms of biological role, catalyzes the attachment of threonine to tRNA(Thr) in a two-step reaction: L-threonine is first activated by ATP to form Thr-AMP and then transferred to the acceptor end of tRNA(Thr). Also edits incorrectly charged L-seryl-tRNA(Thr). The polypeptide is Threonine--tRNA ligase (Staphylothermus marinus (strain ATCC 43588 / DSM 3639 / JCM 9404 / F1)).